Here is a 341-residue protein sequence, read N- to C-terminus: Hypophosphite import ATP-binding protein HtxD (341 aa).

In terms of domain architecture, ABC transporter spans 6–249 (LQLKNVGKSY…RVHALYQVPA (244 aa)). 38-45 (GTSGAGKS) lines the ATP pocket. A disordered region spans residues 278-341 (IHTPHTRAAP…TGRGQDRGPG (64 aa)). Basic and acidic residues-rich tracts occupy residues 307–320 (ADRRHGAVVRDRTT) and 327–341 (GGHDGTGRGQDRGPG).

The protein belongs to the ABC transporter superfamily. Phosphonates importer (TC 3.A.1.9.1) family. As to quaternary structure, the complex is composed of two ATP-binding proteins (HtxD), two transmembrane proteins (HtxC and HtxE) and a solute-binding protein (HtxB).

It localises to the cell inner membrane. It catalyses the reaction phosphinate(out) + ATP + H2O = phosphinate(in) + ADP + phosphate + H(+). Part of the ABC transporter complex HtxBCDE involved in hypophosphite import. Responsible for energy coupling to the transport system. The sequence is that of Hypophosphite import ATP-binding protein HtxD (htxD) from Stutzerimonas stutzeri (Pseudomonas stutzeri).